Here is a 387-residue protein sequence, read N- to C-terminus: 4-hydroxy-3-methylbut-2-en-1-yl diphosphate synthase (flavodoxin) (387 aa).

C280, C283, C315, and E322 together coordinate [4Fe-4S] cluster.

Belongs to the IspG family. [4Fe-4S] cluster is required as a cofactor.

It carries out the reaction (2E)-4-hydroxy-3-methylbut-2-enyl diphosphate + oxidized [flavodoxin] + H2O + 2 H(+) = 2-C-methyl-D-erythritol 2,4-cyclic diphosphate + reduced [flavodoxin]. It participates in isoprenoid biosynthesis; isopentenyl diphosphate biosynthesis via DXP pathway; isopentenyl diphosphate from 1-deoxy-D-xylulose 5-phosphate: step 5/6. Functionally, converts 2C-methyl-D-erythritol 2,4-cyclodiphosphate (ME-2,4cPP) into 1-hydroxy-2-methyl-2-(E)-butenyl 4-diphosphate. This chain is 4-hydroxy-3-methylbut-2-en-1-yl diphosphate synthase (flavodoxin), found in Mycobacterium bovis (strain ATCC BAA-935 / AF2122/97).